We begin with the raw amino-acid sequence, 164 residues long: NADH-quinone oxidoreductase subunit I (164 aa).

4Fe-4S ferredoxin-type domains are found at residues 55–84 (RRYE…IEID) and 95–124 (KVYD…MGPY). Residues Cys64, Cys67, Cys70, Cys74, Cys104, Cys107, Cys110, and Cys114 each contribute to the [4Fe-4S] cluster site.

Belongs to the complex I 23 kDa subunit family. NDH-1 is composed of 14 different subunits. Subunits NuoA, H, J, K, L, M, N constitute the membrane sector of the complex. [4Fe-4S] cluster is required as a cofactor.

The protein localises to the cell inner membrane. It catalyses the reaction a quinone + NADH + 5 H(+)(in) = a quinol + NAD(+) + 4 H(+)(out). Functionally, NDH-1 shuttles electrons from NADH, via FMN and iron-sulfur (Fe-S) centers, to quinones in the respiratory chain. The immediate electron acceptor for the enzyme in this species is believed to be ubiquinone. Couples the redox reaction to proton translocation (for every two electrons transferred, four hydrogen ions are translocated across the cytoplasmic membrane), and thus conserves the redox energy in a proton gradient. The protein is NADH-quinone oxidoreductase subunit I of Magnetococcus marinus (strain ATCC BAA-1437 / JCM 17883 / MC-1).